Here is a 483-residue protein sequence, read N- to C-terminus: MITIETVLTILKNNANFREIIDGKHYQYKYSNPEVAFHHISYDSRDIKASTLFFVKGATFKKEFLEKAIESGLTFYVAEKDYQVGIPLILVNNIKNAMCLIAKEFYDNPQDKLKTLAFTGTKGKTTAAYFAYHILKQGYRPAMISTMNTTLDGKTFFKSKLTTPESLDLFKMMAQAVANGMTHLIMEVSSQAYLVGRVYGLTFDVGVFLNISPDHIGPIEHPTFEDYFYHKRLLLKHSRYVIVNSQMNHFALIKEQVADQPHDFYGKYSDNQIINSKAFSFDLTGKLAGHYDIQLTGSFNQENAVAAALACLQLGASQTDIQKGIVQTTVPGRMEVLIQKNGAKVFVDYAHNGDSLEKLLSVVEEHQKGTLILILGAPGNKGESRRADFGYVINAHPELQVILTADDPNNEDPQLISQEIAHHIKRPVNIIVDRKQAIQKAMSLTQSENDAVIIAGKGADAFQIIKGKRTAYAGDIEVARKYL.

S44 is a binding site for UDP-N-acetyl-alpha-D-muramoyl-L-alanyl-D-glutamate. An ATP-binding site is contributed by 120 to 126 (GTKGKTT). UDP-N-acetyl-alpha-D-muramoyl-L-alanyl-D-glutamate contacts are provided by residues 162 to 163 (TT), S189, and R197. The residue at position 231 (K231) is an N6-carboxylysine. The L-lysine recognition motif signature appears at 406 to 409 (DDPN).

Belongs to the MurCDEF family. MurE subfamily. Post-translationally, carboxylation is probably crucial for Mg(2+) binding and, consequently, for the gamma-phosphate positioning of ATP.

The protein resides in the cytoplasm. The catalysed reaction is UDP-N-acetyl-alpha-D-muramoyl-L-alanyl-D-glutamate + L-lysine + ATP = UDP-N-acetyl-alpha-D-muramoyl-L-alanyl-gamma-D-glutamyl-L-lysine + ADP + phosphate + H(+). The protein operates within cell wall biogenesis; peptidoglycan biosynthesis. Functionally, catalyzes the addition of L-lysine to the nucleotide precursor UDP-N-acetylmuramoyl-L-alanyl-D-glutamate (UMAG) in the biosynthesis of bacterial cell-wall peptidoglycan. The sequence is that of UDP-N-acetylmuramoyl-L-alanyl-D-glutamate--L-lysine ligase from Streptococcus mutans serotype c (strain ATCC 700610 / UA159).